Reading from the N-terminus, the 425-residue chain is Serine--tRNA ligase (425 aa).

Thr-230–Glu-232 serves as a coordination point for L-serine. Arg-261 to Glu-263 contributes to the ATP binding site. Glu-284 serves as a coordination point for L-serine. Glu-348–Ser-351 is an ATP binding site. Ser-385 is a binding site for L-serine.

The protein belongs to the class-II aminoacyl-tRNA synthetase family. Type-1 seryl-tRNA synthetase subfamily. Homodimer. The tRNA molecule binds across the dimer.

It is found in the cytoplasm. The catalysed reaction is tRNA(Ser) + L-serine + ATP = L-seryl-tRNA(Ser) + AMP + diphosphate + H(+). The enzyme catalyses tRNA(Sec) + L-serine + ATP = L-seryl-tRNA(Sec) + AMP + diphosphate + H(+). Its pathway is aminoacyl-tRNA biosynthesis; selenocysteinyl-tRNA(Sec) biosynthesis; L-seryl-tRNA(Sec) from L-serine and tRNA(Sec): step 1/1. Functionally, catalyzes the attachment of serine to tRNA(Ser). Is also able to aminoacylate tRNA(Sec) with serine, to form the misacylated tRNA L-seryl-tRNA(Sec), which will be further converted into selenocysteinyl-tRNA(Sec). The polypeptide is Serine--tRNA ligase (Wolbachia pipientis wMel).